Reading from the N-terminus, the 89-residue chain is Small ribosomal subunit protein bS20 (89 aa).

Positions 1 to 28 (MANHYSALKRARQTETRTARNRANTSRM) are disordered.

Belongs to the bacterial ribosomal protein bS20 family.

Functionally, binds directly to 16S ribosomal RNA. This Koribacter versatilis (strain Ellin345) protein is Small ribosomal subunit protein bS20.